A 336-amino-acid chain; its full sequence is DNA-directed RNA polymerase subunit alpha (336 aa).

The interval 1–226 (MLIAQRPTLS…ELFGLARELN (226 aa)) is alpha N-terminal domain (alpha-NTD). Residues 241–336 (AALAADMALP…DDAAFSDDEL (96 aa)) form an alpha C-terminal domain (alpha-CTD) region.

This sequence belongs to the RNA polymerase alpha chain family. Homodimer. The RNAP catalytic core consists of 2 alpha, 1 beta, 1 beta' and 1 omega subunit. When a sigma factor is associated with the core the holoenzyme is formed, which can initiate transcription.

It carries out the reaction RNA(n) + a ribonucleoside 5'-triphosphate = RNA(n+1) + diphosphate. Functionally, DNA-dependent RNA polymerase catalyzes the transcription of DNA into RNA using the four ribonucleoside triphosphates as substrates. The chain is DNA-directed RNA polymerase subunit alpha from Arthrobacter sp. (strain FB24).